We begin with the raw amino-acid sequence, 188 residues long: Elongation factor P (188 aa).

The residue at position 34 (Lys-34) is an N6-(3,6-diaminohexanoyl)-5-hydroxylysine.

Belongs to the elongation factor P family. May be beta-lysylated on the epsilon-amino group of Lys-34 by the combined action of EpmA and EpmB, and then hydroxylated on the C5 position of the same residue by EpmC (if this protein is present). Lysylation is critical for the stimulatory effect of EF-P on peptide-bond formation. The lysylation moiety may extend toward the peptidyltransferase center and stabilize the terminal 3-CCA end of the tRNA. Hydroxylation of the C5 position on Lys-34 may allow additional potential stabilizing hydrogen-bond interactions with the P-tRNA.

Its subcellular location is the cytoplasm. It participates in protein biosynthesis; polypeptide chain elongation. In terms of biological role, involved in peptide bond synthesis. Alleviates ribosome stalling that occurs when 3 or more consecutive Pro residues or the sequence PPG is present in a protein, possibly by augmenting the peptidyl transferase activity of the ribosome. Modification of Lys-34 is required for alleviation. In Klebsiella pneumoniae (strain 342), this protein is Elongation factor P.